The following is a 427-amino-acid chain: Nucleolar and spindle-associated protein 1 (427 aa).

The segment at 41–190 (AHLNPETRKE…LGNNKRTSAT (150 aa)) is disordered. The segment covering 43 to 55 (LNPETRKENKNQD) has biased composition (basic and acidic residues). Residues 83 to 96 (TKTRRRRRKKHKTI) show a composition bias toward basic residues. A compositionally biased stretch (low complexity) spans 119–128 (NFQNQENQEN). Ser-139 bears the Phosphoserine mark. Positions 159 to 179 (NDIKDSKKPLEKRSLCTDEFS) are enriched in basic and acidic residues. Polar residues predominate over residues 181–190 (LGNNKRTSAT). Thr-191 carries the phosphothreonine modification. The segment at 235 to 312 (IVTPVPPRGR…QAVFRTPKSK (78 aa)) is disordered. Residues 243–367 (GRLSVPCTPA…HKGKLKPWGQ (125 aa)) are interaction with microtubules. Ser-246 carries the post-translational modification Phosphoserine. Phosphothreonine is present on Thr-250. The span at 252-264 (ARQQCPQGHSATK) shows a compositional bias: polar residues. A Phosphoserine modification is found at Ser-261. A phosphothreonine mark is found at Thr-323 and Thr-334. Phosphoserine occurs at positions 337 and 348. Residues 354–427 (NYKPHKGKLK…RRNLGVTKAQ (74 aa)) form a disordered region. A KEN box motif is present at residues 369 to 375 (KENNSLN). Residues 393–425 (LQTREERWKRQEQERKEKKEKLLEARRNLGVTK) adopt a coiled-coil conformation. Residues 394 to 419 (QTREERWKRQEQERKEKKEKLLEARR) show a composition bias toward basic and acidic residues.

It belongs to the NUSAP family. In terms of assembly, interacts with DNA and microtubules. Microtubule bundling is inhibited by IPO7, KPNA2 and KPNB1 while association with DNA is also inhibited by IPO7 and KPNA2. Ubiquitinated. Ubiquitination by FZR1 may lead to proteasome-dependent degradation of this protein.

It is found in the cytoplasm. The protein localises to the nucleus. It localises to the nucleolus. The protein resides in the cytoskeleton. Its subcellular location is the spindle. It is found in the chromosome. In terms of biological role, microtubule-associated protein with the capacity to bundle and stabilize microtubules. May associate with chromosomes and promote the organization of mitotic spindle microtubules around them. This Mus musculus (Mouse) protein is Nucleolar and spindle-associated protein 1 (Nusap1).